Here is a 643-residue protein sequence, read N- to C-terminus: MPIITLPDGSQRQFEQPISVMDVAASIGAGLAKACIAGRVNGERKDACDLITEDSKLEIITAKEEDGLEIIRHSCAHLLGHAIKQLFPNVKMAIGPTIDKGFYYDVDLDRSLTQEDLDALEKRMLELAKTNYDVVKKVVSWQEARDTFEARGEPYKMAILDENIDRCDTPALYHHEEYVDMCRGPHVPNMRFCHHFKLMKVAGAYWRGDSKNKMLQRIYGTAWADKKQLSEYLTRLEEAAKRDHRKIGKALDLYHMQEEAPGMVFWHNDGWTIFRELETFVRTKLKEYDYQEVKGPFMMDRVLWEKTGHWQNYGDLMFTTQSENREYAIKPMNCPGHVQIFNQGLKSYRDLPIRMAEFGSCHRNEPSGSLHGLMRVRGFTQDDAHIFCTEDQIESEVTACIKMVYDIYSTFGFENIQVKLSTRPEKRIGADEMWDRAEAGLAAALSHNGLEYEIQEGEGAFYGPKIEFALRDCLDREWQCGTIQLDFALPGRLNASYVAEDNDRRTPVMIHRAILGSIERFIGIITEEYAGFFPAWLAPTQAIVMNITDSQSDYVQKVVKTLSDAGLRVKSDLRNEKIGFKIREHTLRRVPYMLVCGDKEIEAGKVAVRTRKGADLGTFTIEEFLDILKKQVRSRELKLLGEE.

The 61-residue stretch at 1–61 folds into the TGS domain; it reads MPIITLPDGS…TEDSKLEIIT (61 aa). The interval 243–534 is catalytic; the sequence is DHRKIGKALD…ITEEYAGFFP (292 aa). Positions 334, 385, and 511 each coordinate Zn(2+).

This sequence belongs to the class-II aminoacyl-tRNA synthetase family. As to quaternary structure, homodimer. It depends on Zn(2+) as a cofactor.

Its subcellular location is the cytoplasm. The enzyme catalyses tRNA(Thr) + L-threonine + ATP = L-threonyl-tRNA(Thr) + AMP + diphosphate + H(+). Its function is as follows. Catalyzes the attachment of threonine to tRNA(Thr) in a two-step reaction: L-threonine is first activated by ATP to form Thr-AMP and then transferred to the acceptor end of tRNA(Thr). Also edits incorrectly charged L-seryl-tRNA(Thr). This is Threonine--tRNA ligase from Pasteurella multocida (strain Pm70).